Consider the following 602-residue polypeptide: Glutamine--fructose-6-phosphate aminotransferase [isomerizing] (602 aa).

Cysteine 2 (nucleophile; for GATase activity) is an active-site residue. The Glutamine amidotransferase type-2 domain occupies 2–217; that stretch reads CGIVGVVGNT…DQELVIVKAD (216 aa). Positions 67–87 are disordered; the sequence is IGHTRWATHGKPTEDNAHPHR. The segment covering 77 to 87 has biased composition (basic and acidic residues); that stretch reads KPTEDNAHPHR. SIS domains lie at 283–422 and 455–592; these read IIKA…ANGN and VREL…VDKP. The active-site For Fru-6P isomerization activity is the lysine 597.

In terms of assembly, homodimer.

The protein localises to the cytoplasm. It catalyses the reaction D-fructose 6-phosphate + L-glutamine = D-glucosamine 6-phosphate + L-glutamate. Functionally, catalyzes the first step in hexosamine metabolism, converting fructose-6P into glucosamine-6P using glutamine as a nitrogen source. In Streptococcus pneumoniae serotype 4 (strain ATCC BAA-334 / TIGR4), this protein is Glutamine--fructose-6-phosphate aminotransferase [isomerizing].